Here is a 96-residue protein sequence, read N- to C-terminus: Non-specific lipid-transfer protein 2G (96 aa).

The N-terminal stretch at 1–29 is a signal peptide; the sequence is MAGMMKKQVVTALMLALVVLAAAPGGARA. 4 disulfides stabilise this stretch: Cys31–Cys63, Cys39–Cys53, Cys54–Cys89, and Cys65–Cys96.

It is found in the secreted. It localises to the cell wall. In terms of biological role, transfer lipids across membranes. May play a role in plant defense or in the biosynthesis of cuticle layers. This chain is Non-specific lipid-transfer protein 2G, found in Triticum aestivum (Wheat).